Here is a 124-residue protein sequence, read N- to C-terminus: Small ribosomal subunit protein eS25 (124 aa).

The segment covering 1–22 (MPPKDSKQKKDTSKAKKDKDPV) has biased composition (basic and acidic residues). The disordered stretch occupies residues 1–37 (MPPKDSKQKKDTSKAKKDKDPVNKSGGKAKKKKWSKG). Residues 27–37 (GKAKKKKWSKG) show a composition bias toward basic residues.

Belongs to the eukaryotic ribosomal protein eS25 family. Component of the small ribosomal subunit.

The protein localises to the cytoplasm. Functionally, component of the small ribosomal subunit. The ribosome is a large ribonucleoprotein complex responsible for the synthesis of proteins in the cell. This is Small ribosomal subunit protein eS25 (rps25) from Ictalurus punctatus (Channel catfish).